The primary structure comprises 564 residues: Acetylcholine receptor subunit alpha-type deg-3 (564 aa).

An N-terminal signal peptide occupies residues 1–20 (MTLKIRTIIILFCVISVTTT). Residues 21-268 (SQSLNATLKT…SLVIQRKPLY (248 aa)) lie on the Extracellular side of the membrane. N-linked (GlcNAc...) asparagine glycans are attached at residues Asn25, Asn37, Asn125, and Asn198. Cystine bridges form between Cys185–Cys199 and Cys248–Cys249. 3 helical membrane-spanning segments follow: residues 269–289 (YLVNLIIPTSIITLVAITGFF), 302–319 (INLGITTLLAMSILMLMV), and 329–353 (FVPLIAWFYLSIIIIISIGTFLTSV). The Cytoplasmic portion of the chain corresponds to 354–526 (VLSVQGRRQY…WEFLATVLDR (173 aa)). The helical transmembrane segment at 527–547 (FLLIVFVGAVVIVTAGLILVG) threads the bilayer.

It belongs to the ligand-gated ion channel (TC 1.A.9) family. Acetylcholine receptor (TC 1.A.9.1) subfamily. In terms of assembly, the functional receptor is a heteromer of deg-3 and des-2. Interacts with ric-3; which is required for proper receptor folding.

It localises to the postsynaptic cell membrane. The protein resides in the cell membrane. Subunit of the non-synaptic neuronal acetylcholine receptor, which may play a role in chemotaxis towards choline. After binding choline or acetylcholine, the AChR responds by an extensive change in conformation that affects all subunits and leads to opening of an ion-conducting channel across the plasma membrane. The chain is Acetylcholine receptor subunit alpha-type deg-3 (deg-3) from Caenorhabditis elegans.